The sequence spans 382 residues: Intermediate transcription factor 3 large subunit (382 aa).

Belongs to the poxviruses A23 family. Heterodimer of a 45 kDa and a 32 kDa subunit.

Acts with RNA polymerase to initiate transcription from intermediate gene promoters. The protein is Intermediate transcription factor 3 large subunit (VITF3L) of Oryctolagus cuniculus (Rabbit).